The primary structure comprises 252 residues: 5'-nucleotidase SurE (252 aa).

A divalent metal cation contacts are provided by aspartate 8, aspartate 9, serine 39, and asparagine 95.

Belongs to the SurE nucleotidase family. The cofactor is a divalent metal cation.

The protein resides in the cytoplasm. It catalyses the reaction a ribonucleoside 5'-phosphate + H2O = a ribonucleoside + phosphate. Functionally, nucleotidase that shows phosphatase activity on nucleoside 5'-monophosphates. The chain is 5'-nucleotidase SurE from Clostridium botulinum (strain ATCC 19397 / Type A).